A 270-amino-acid chain; its full sequence is Diaminopimelate epimerase (270 aa).

Asparagine 15, glutamine 49, and asparagine 66 together coordinate substrate. The active-site Proton donor is cysteine 75. Substrate contacts are provided by residues 76–77 (GN), asparagine 155, asparagine 187, and 204–205 (ER). The active-site Proton acceptor is the cysteine 213. Substrate is bound at residue 214-215 (GS).

Belongs to the diaminopimelate epimerase family. As to quaternary structure, homodimer.

The protein resides in the cytoplasm. It catalyses the reaction (2S,6S)-2,6-diaminopimelate = meso-2,6-diaminopimelate. The protein operates within amino-acid biosynthesis; L-lysine biosynthesis via DAP pathway; DL-2,6-diaminopimelate from LL-2,6-diaminopimelate: step 1/1. Functionally, catalyzes the stereoinversion of LL-2,6-diaminopimelate (L,L-DAP) to meso-diaminopimelate (meso-DAP), a precursor of L-lysine and an essential component of the bacterial peptidoglycan. The chain is Diaminopimelate epimerase from Rickettsia conorii (strain ATCC VR-613 / Malish 7).